Here is a 378-residue protein sequence, read N- to C-terminus: Carbamoyl phosphate synthase small chain (378 aa).

The segment at Met1–Lys188 is CPSase. Residues Ser50, Gly240, and Gly242 each coordinate L-glutamine. Residues His192–Gln378 form the Glutamine amidotransferase type-1 domain. Residue Cys268 is the Nucleophile of the active site. L-glutamine-binding residues include Leu269, Gln272, Asn310, Gly312, and Phe313. Active-site residues include His352 and Glu354.

The protein belongs to the CarA family. In terms of assembly, composed of two chains; the small (or glutamine) chain promotes the hydrolysis of glutamine to ammonia, which is used by the large (or ammonia) chain to synthesize carbamoyl phosphate. Tetramer of heterodimers (alpha,beta)4.

The catalysed reaction is hydrogencarbonate + L-glutamine + 2 ATP + H2O = carbamoyl phosphate + L-glutamate + 2 ADP + phosphate + 2 H(+). The enzyme catalyses L-glutamine + H2O = L-glutamate + NH4(+). It participates in amino-acid biosynthesis; L-arginine biosynthesis; carbamoyl phosphate from bicarbonate: step 1/1. It functions in the pathway pyrimidine metabolism; UMP biosynthesis via de novo pathway; (S)-dihydroorotate from bicarbonate: step 1/3. Its function is as follows. Small subunit of the glutamine-dependent carbamoyl phosphate synthetase (CPSase). CPSase catalyzes the formation of carbamoyl phosphate from the ammonia moiety of glutamine, carbonate, and phosphate donated by ATP, constituting the first step of 2 biosynthetic pathways, one leading to arginine and/or urea and the other to pyrimidine nucleotides. The small subunit (glutamine amidotransferase) binds and cleaves glutamine to supply the large subunit with the substrate ammonia. This Ralstonia nicotianae (strain ATCC BAA-1114 / GMI1000) (Ralstonia solanacearum) protein is Carbamoyl phosphate synthase small chain.